We begin with the raw amino-acid sequence, 335 residues long: Cytoskeleton protein RodZ (335 aa).

At 1 to 111 the chain is on the cytoplasmic side; sequence MNTEATHDQN…LGKRRKKRDG (111 aa). The 53-residue stretch at 19–71 folds into the HTH cro/C1-type domain; the sequence is LRNAREQLGLSQQAVAERLCLKVSTVRDIEEDKAPADLASTFLRGYIRSYARL. The H-T-H motif DNA-binding region spans 30–49; the sequence is QQAVAERLCLKVSTVRDIEE. A helical; Signal-anchor for type II membrane protein transmembrane segment spans residues 112–132; the sequence is WLMTFTWLVLFVVIGLSGAWW. The Periplasmic segment spans residues 133-335; the sequence is WQDHKAQQEE…TLNAEQSPAQ (203 aa). Over residues 148 to 164 the composition is skewed to polar residues; sequence DQSSAELNNNQSQSVPL. Residues 148-244 form a disordered region; sequence DQSSAELNNN…PLPTDQAGVT (97 aa). 2 stretches are compositionally biased toward low complexity: residues 165–205 and 217–239; these read DTST…DPQQ and DTAA…LPTD.

It belongs to the RodZ family.

The protein localises to the cell inner membrane. Its function is as follows. Cytoskeletal protein that is involved in cell-shape control through regulation of the length of the long axis. This Escherichia coli O6:H1 (strain CFT073 / ATCC 700928 / UPEC) protein is Cytoskeleton protein RodZ.